The chain runs to 444 residues: Abhydrolase domain-containing protein abhd-5.2 (444 aa).

In terms of domain architecture, AB hydrolase-1 spans 162–409 (PIVLIHGFGA…SAGHHVYADD (248 aa)).

This sequence belongs to the peptidase S33 family. ABHD4/ABHD5 subfamily. Interacts with atgl-1; the interaction tethers atgl-1 to lipid droplets. Expressed in the hypodermis and intestine.

The protein localises to the lipid droplet. Its function is as follows. Acts coordinately with phospholipase atgl-1 within the lipolytic cascade to distribute stored energy to tissues to maintain energy levels during the dauer phase. Localizes atgl-1 to lipid droplets, possibly to facilitate triglyceride hydrolysis. Regulates lipid droplet size, lipid content, the exchange of lipids between lipid droplets and fusion of lipid droplets during the dauer phase. This chain is Abhydrolase domain-containing protein abhd-5.2, found in Caenorhabditis elegans.